The primary structure comprises 362 residues: MIDPFKRLARKGLFLFDPETAHGMSIAALKSGLVPACQITPDPRLRQTVAGLTFENPLGMAAGYDKNAEVPEALLRLGFGFTEIGTVTPRPQSGNPRPRIFRLVEDEAVINRLGFNNEGHEAAFERLSALTGKGVVGVNIGANKDSEDRITDYVAGIRCFYSVARYFTANISSPNTPGLRDLQARESLAALLSAVLAARDEMAERSGRKIPVFLKIAPDLTEEGMDDIAAEALAHPLDGLIVSNTTLSREGLKDQRQAKETGGLSGVPLFEKSTAVLARMRKRVGAALPIIGVGGVSSAETALEKIRAGADLVQLYSCMVYEGPGLPGNIVRGLSGLLDREKAGSIRELRDSRLDYWAARKV.

Residues 62 to 66 and T86 each bind FMN; that span reads AGYDK. Residue K66 coordinates substrate. Substrate is bound at residue 111–115; the sequence is NRLGF. Residues N139 and N170 each contribute to the FMN site. Substrate is bound at residue N170. S173 functions as the Nucleophile in the catalytic mechanism. N175 contributes to the substrate binding site. Residues K215 and S243 each contribute to the FMN site. Residue 244–245 participates in substrate binding; that stretch reads NT. FMN is bound by residues G266, G295, and 316–317; that span reads YS.

The protein belongs to the dihydroorotate dehydrogenase family. Type 2 subfamily. As to quaternary structure, monomer. FMN serves as cofactor.

The protein localises to the cell membrane. The enzyme catalyses (S)-dihydroorotate + a quinone = orotate + a quinol. It participates in pyrimidine metabolism; UMP biosynthesis via de novo pathway; orotate from (S)-dihydroorotate (quinone route): step 1/1. In terms of biological role, catalyzes the conversion of dihydroorotate to orotate with quinone as electron acceptor. This chain is Dihydroorotate dehydrogenase (quinone), found in Rhizobium etli (strain CIAT 652).